The following is a 162-amino-acid chain: Phosphopantetheine adenylyltransferase (162 aa).

Ser-9 contacts substrate. ATP-binding positions include 9 to 10 (SF) and His-17. Residues Lys-41, Leu-77, and Lys-91 each coordinate substrate. Residues 92-94 (GLR), Glu-102, and 126-132 (YAFLSSS) contribute to the ATP site.

The protein belongs to the bacterial CoaD family. Homohexamer. Requires Mg(2+) as cofactor.

The protein localises to the cytoplasm. The enzyme catalyses (R)-4'-phosphopantetheine + ATP + H(+) = 3'-dephospho-CoA + diphosphate. Its pathway is cofactor biosynthesis; coenzyme A biosynthesis; CoA from (R)-pantothenate: step 4/5. Its function is as follows. Reversibly transfers an adenylyl group from ATP to 4'-phosphopantetheine, yielding dephospho-CoA (dPCoA) and pyrophosphate. The sequence is that of Phosphopantetheine adenylyltransferase from Parafrankia sp. (strain EAN1pec).